The chain runs to 855 residues: Inactive rhomboid protein 1 (855 aa).

The disordered stretch occupies residues 1–36 (MSEARRDSTSSLQRKKPPWLKLDIPSAVPPTAEEPS). The Cytoplasmic segment spans residues 1-411 (MSEARRDSTS…HRPFFTYWLT (411 aa)). Phosphoserine is present on residues S76 and S176. T180 and T183 each carry phosphothreonine. At S390 the chain carries Phosphoserine. Residues 412–432 (FVHSLVTILAVCIYGIAPVGF) form a helical membrane-spanning segment. The Lumenal segment spans residues 433–655 (SQHETVDSVL…NPEVPDQFYR (223 aa)). N-linked (GlcNAc...) asparagine glycosylation occurs at N583. The chain crosses the membrane as a helical span at residues 656–676 (LWLSLFLHAGILHCLVSICFQ). The Cytoplasmic segment spans residues 677 to 691 (MTVLRDLEKLAGWHR). A helical membrane pass occupies residues 692 to 712 (IAIIYLLSGVTGNLASAIFLP). The Lumenal segment spans residues 713–714 (YR). A helical transmembrane segment spans residues 715-735 (AEVGPAGSQFGILACLFVELF). The Cytoplasmic portion of the chain corresponds to 736–746 (QSWQILARPWR). The helical transmembrane segment at 747-767 (AFFKLLAVVLFLFTFGLLPWI) threads the bilayer. Residues 768–772 (DNFAH) lie on the Lumenal side of the membrane. A helical transmembrane segment spans residues 773–793 (ISGFISGLFLSFAFLPYISFG). Topologically, residues 794–803 (KFDLYRKRCQ) are cytoplasmic. Residues 804–824 (IIIFQVVFLGLLAGLVVLFYF) form a helical membrane-spanning segment. At 825-855 (YPVRCEWCEFLTCIPFTDKFCEKYELDAQLH) the chain is on the lumenal side.

The protein belongs to the peptidase S54 family. Homodimer, or homooligomer. Interacts with TGFA and HBEGF. Interacts with EGF; may retain EGF in the endoplasmic reticulum and regulates its degradation through the endoplasmic reticulum-associated degradation (ERAD). Interacts (via cytoplasmic N-terminus) with FRMD8/iTAP; this interaction leads to mutual protein stabilization. Interacts with ADAM17/TACE.

It localises to the endoplasmic reticulum membrane. It is found in the golgi apparatus membrane. In terms of biological role, regulates ADAM17 protease, a sheddase of the epidermal growth factor (EGF) receptor ligands and TNF, thereby plays a role in sleep, cell survival, proliferation, migration and inflammation. Does not exhibit any protease activity on its own. The protein is Inactive rhomboid protein 1 (RHBDF1) of Papio anubis (Olive baboon).